A 117-amino-acid polypeptide reads, in one-letter code: Putative cysteine proteinase inhibitor 7 (117 aa).

The signal sequence occupies residues 1–24 (MTMRTSSLLLAAVAVVAIVAGATA). Residues 28-84 (GSWEPVDINDPHVQELGRWAVAEEDRGVAAGGLTFERVTDGEKQVVAGVNYRLTLEA) form the Cystatin domain. The short motif at 71–75 (QVVAG) is the Secondary area of contact element.

This sequence belongs to the cystatin family. Phytocystatin subfamily.

Its subcellular location is the secreted. Functionally, specific inhibitor of cysteine proteinases. Probably involved in the regulation of endogenous processes and in defense against pests and pathogens. This chain is Putative cysteine proteinase inhibitor 7, found in Oryza sativa subsp. japonica (Rice).